We begin with the raw amino-acid sequence, 83 residues long: FMRFamide-like neuropeptide 23 (83 aa).

An N-terminal signal peptide occupies residues 1 to 24 (MLLPKISILLYILVVLQETAAVRG). Residues 25–36 (ALFRSGRAVPFE) constitute a propeptide that is removed on maturation. Position 47 is a phenylalanine amide (F47). Positions 50-83 (AGMASGVGGGSEGGPDDVKNSYIRVNGEPEIVYQ) are excised as a propeptide.

It belongs to the FARP (FMRFamide related peptide) family. As to expression, each flp gene is expressed in a distinct set of neurons.

It is found in the secreted. In terms of biological role, FMRFamides and FMRFamide-like peptides are neuropeptides. This is FMRFamide-like neuropeptide 23 (flp-23) from Caenorhabditis elegans.